A 436-amino-acid chain; its full sequence is Cyclic nucleotide-binding domain-containing protein 1 (436 aa).

Basic and acidic residues predominate over residues 89-105 (EQRELNEGKEESQHQQP). The segment at 89 to 108 (EQRELNEGKEESQHQQPDDS) is disordered. 322–436 (YYEEWPTLSI…IIEDKDLFVA (115 aa)) provides a ligand contact to a nucleoside 3',5'-cyclic phosphate.

This chain is Cyclic nucleotide-binding domain-containing protein 1 (CNBD1), found in Homo sapiens (Human).